Here is a 258-residue protein sequence, read N- to C-terminus: Probable enoyl-CoA hydratase (258 aa).

It belongs to the enoyl-CoA hydratase/isomerase family.

It carries out the reaction a (3S)-3-hydroxyacyl-CoA = a (2E)-enoyl-CoA + H2O. The enzyme catalyses a 4-saturated-(3S)-3-hydroxyacyl-CoA = a (3E)-enoyl-CoA + H2O. Its pathway is lipid metabolism; fatty acid beta-oxidation. In terms of biological role, involved in the degradation of long-chain fatty acids. The chain is Probable enoyl-CoA hydratase (fadB) from Bacillus subtilis (strain 168).